The chain runs to 835 residues: Protein P (835 aa).

The interval 1 to 176 is terminal protein domain (TP); it reads MPLSYQHFRK…FFGTPYTWEH (176 aa). Residues 177-334 are spacer; the sequence is KLQHGTQPVN…HCLHHIVKLL (158 aa). Disordered regions lie at residues 211 to 235 and 258 to 288; these read LGQK…WSRT and RHPS…PTSH. Positions 335–680 are polymerase/reverse transcriptase domain (RT); it reads DDWGPCQHHG…YMHLYPVARQ (346 aa). Positions 345–590 constitute a Reverse transcriptase domain; sequence HHFIRIPRTP…KALNFMGYVI (246 aa). Residues Asp-417, Asp-541, and Asp-542 each coordinate Mg(2+).

The protein belongs to the hepadnaviridae P protein family.

It carries out the reaction DNA(n) + a 2'-deoxyribonucleoside 5'-triphosphate = DNA(n+1) + diphosphate. The catalysed reaction is Endonucleolytic cleavage to 5'-phosphomonoester.. Activated by host HSP70 and HSP40 in vitro to be able to bind the epsilon loop of the pgRNA. Because deletion of the RNase H region renders the protein partly chaperone-independent, the chaperones may be needed indirectly to relieve occlusion of the RNA-binding site by this domain. Inhibited by several reverse-transcriptase inhibitors: Lamivudine, Adefovir and Entecavir. Its function is as follows. Multifunctional enzyme that converts the viral RNA genome into dsDNA in viral cytoplasmic capsids. This enzyme displays a DNA polymerase activity that can copy either DNA or RNA templates, and a ribonuclease H (RNase H) activity that cleaves the RNA strand of RNA-DNA heteroduplexes in a partially processive 3'- to 5'-endonucleasic mode. Neo-synthesized pregenomic RNA (pgRNA) are encapsidated together with the P protein, and reverse-transcribed inside the nucleocapsid. Initiation of reverse-transcription occurs first by binding the epsilon loop on the pgRNA genome, and is initiated by protein priming, thereby the 5'-end of (-)DNA is covalently linked to P protein. Partial (+)DNA is synthesized from the (-)DNA template and generates the relaxed circular DNA (RC-DNA) genome. After budding and infection, the RC-DNA migrates in the nucleus, and is converted into a plasmid-like covalently closed circular DNA (cccDNA). The activity of P protein does not seem to be necessary for cccDNA generation, and is presumably released from (+)DNA by host nuclear DNA repair machinery. This Woolly monkey hepatitis B virus (isolate Louisville) (WMHBV) protein is Protein P.